The following is a 288-amino-acid chain: MSELRLMAVHAHPDDESSKGAATLARYADEGHRVLVVTLTGGERGEILNPAMDLPDVHGRIAEIRRDEMTKAAEILGVEHTWLGFVDSGLPKGDLPPPLPDDCFARVPLEVSTEALVRVVREFRPHVMTTYDENGGYPHPDHIRCHQVSVAAYEAAGDFCRFPDAGEPWTVSKLYYVHGFLRERMQMLQDEFARHGQRGPFEQWLAYWDPDHDFLTSRVTTRVECSKYFSQRDDALRAHATQIDPNAEFFAAPLAWQERLWPTEEFELARSRIPARPPETELFAGIEP.

Residues His12, Asp15, and His142 each coordinate Zn(2+).

This sequence belongs to the MshB deacetylase family. Mca subfamily. In terms of assembly, monomer. Requires Zn(2+) as cofactor.

The enzyme catalyses mycothiol S-conjugate + H2O = an N-acetyl-L-cysteine-S-conjugate + 1D-myo-inositol 2-amino-2-deoxy-alpha-D-glucopyranoside. With respect to regulation, partially inhibited by MSH when MSmB is used as substrate. Competitively inhibited by the GlcNAc-cyclohexyl derivative 5-(4-chlorophenyl)-N-((2R,3R,4R,5S,6R)-2-(cyclohexylthio)-tetrahydro-4,5-dihydroxy-6-(hydroxymethyl)-2H-pyran-3-yl)furan-2-carboxamide, which also inhibits MshB. Its function is as follows. A mycothiol (MSH, N-acetyl-cysteinyl-glucosaminyl-inositol) S-conjugate amidase, it recycles conjugated MSH to the N-acetyl cysteine conjugate and the MSH precursor. Involved in MSH-dependent detoxification of a number of alkylating agents and antibiotics. Activity is specific for the mycothiol moiety. Has a low but measurable deacetylation activity on GlcNAc-Ins (N-acetyl-glucosaminyl-inositol), and thus can also directly contribute to the production of MSH. The polypeptide is Mycothiol S-conjugate amidase (Mycobacterium tuberculosis (strain ATCC 25618 / H37Rv)).